The sequence spans 32 residues: Secreted proteinase (32 aa).

A disordered region spans residues 1–32 (DTANDPKYGSQYAPQKVNADVDQGVXXXHPEL). Residue Asp-22 is the Charge relay system of the active site.

This sequence belongs to the peptidase S8 family.

It is found in the secreted. The sequence is that of Secreted proteinase from Haloferax mediterranei (Halobacterium mediterranei).